The following is a 247-amino-acid chain: Pyridoxine 5'-phosphate synthase (247 aa).

Asn12 provides a ligand contact to 3-amino-2-oxopropyl phosphate. 14-15 contacts 1-deoxy-D-xylulose 5-phosphate; it reads DH. Arg23 serves as a coordination point for 3-amino-2-oxopropyl phosphate. Catalysis depends on His48, which acts as the Proton acceptor. 2 residues coordinate 1-deoxy-D-xylulose 5-phosphate: Arg50 and His55. Glu75 acts as the Proton acceptor in catalysis. Thr105 lines the 1-deoxy-D-xylulose 5-phosphate pocket. His196 (proton donor) is an active-site residue. 3-amino-2-oxopropyl phosphate contacts are provided by residues Gly197 and 218-219; that span reads GH.

This sequence belongs to the PNP synthase family. In terms of assembly, homooctamer; tetramer of dimers.

It localises to the cytoplasm. It carries out the reaction 3-amino-2-oxopropyl phosphate + 1-deoxy-D-xylulose 5-phosphate = pyridoxine 5'-phosphate + phosphate + 2 H2O + H(+). It functions in the pathway cofactor biosynthesis; pyridoxine 5'-phosphate biosynthesis; pyridoxine 5'-phosphate from D-erythrose 4-phosphate: step 5/5. In terms of biological role, catalyzes the complicated ring closure reaction between the two acyclic compounds 1-deoxy-D-xylulose-5-phosphate (DXP) and 3-amino-2-oxopropyl phosphate (1-amino-acetone-3-phosphate or AAP) to form pyridoxine 5'-phosphate (PNP) and inorganic phosphate. The sequence is that of Pyridoxine 5'-phosphate synthase from Pseudomonas fluorescens (strain Pf0-1).